A 612-amino-acid chain; its full sequence is MEFSRETRRLALQKMQERDLDLLIIGGGITGAGVALQAAASGLDTGLIEMQDFAQGTSSRSTKLVHGGLRYLKQFDVEVVSDTVSERAVVQQIAPHIPKPDPMLLPVYDEPGSTFSMFRLKVAMDLYDLLAGVSNTPAANKVLTKEEVLKREPDLKQEGLLGGGVYLDFRNNDARLVIENIKRANRDGALIASHVKAEDFLLDDNGKIIGVKARDLLSDQEIIIKAKLVINTTGPWSDEIRQFSHKGQPIHQMRPTKGVHLVVDRQKLPVSQPVYVDTGLNDGRMVFVLPREEKTYFGTTDTDYTGDLEHPQVTQEDVDYLLGVVNNRFPNANVTIDDIESSWAGLRPLLSGNSASDYNGGNSGKVSDDSFDHLVDTVKAYINHEDSREAVEKAIKQVETSTSEKELDPSAVSRGSSFERDENGLFTLAGGKITDYRKMAEGALTGIIQILKEEFGKSFKLINSKTYPVSGGEINPANVDSEIEAYAQLGTLSGLSMDDARYLANLYGSNAPKVFALTRQLTAAEGLSLAETLSLHYAMDYEMALKPTDYFLRRTNHLLFMRDSLDALIDPVINEMAKHFEWSDQERVAQEDDLRRVIADNDLSALKGHQEG.

FAD is bound at residue 21–49 (DLLIIGGGITGAGVALQAAASGLDTGLIE). A compositionally biased stretch (basic and acidic residues) spans 399 to 408 (ETSTSEKELD). Residues 399 to 418 (ETSTSEKELDPSAVSRGSSF) form a disordered region.

Belongs to the FAD-dependent glycerol-3-phosphate dehydrogenase family. FAD serves as cofactor.

It localises to the cytoplasm. The enzyme catalyses sn-glycerol 3-phosphate + O2 = dihydroxyacetone phosphate + H2O2. The protein is Alpha-glycerophosphate oxidase (glpO) of Streptococcus pyogenes serotype M1.